A 215-amino-acid polypeptide reads, in one-letter code: Thymidylate kinase (215 aa).

An ATP-binding site is contributed by 7-14; the sequence is GMEGSGKS.

It belongs to the thymidylate kinase family.

The catalysed reaction is dTMP + ATP = dTDP + ADP. In terms of biological role, phosphorylation of dTMP to form dTDP in both de novo and salvage pathways of dTTP synthesis. The chain is Thymidylate kinase from Nitratidesulfovibrio vulgaris (strain DSM 19637 / Miyazaki F) (Desulfovibrio vulgaris).